The following is a 102-amino-acid chain: Small ribosomal subunit protein eS24 (102 aa).

It belongs to the eukaryotic ribosomal protein eS24 family.

The sequence is that of Small ribosomal subunit protein eS24 from Methanococcus maripaludis (strain C5 / ATCC BAA-1333).